Reading from the N-terminus, the 212-residue chain is Imidazole glycerol phosphate synthase subunit HisH (212 aa).

Residues 2-212 (RVVVIDYNGG…ILGNFLRWTS (211 aa)) enclose the Glutamine amidotransferase type-1 domain. The active-site Nucleophile is the C85. Residues H192 and E194 contribute to the active site.

In terms of assembly, heterodimer of HisH and HisF.

It localises to the cytoplasm. The catalysed reaction is 5-[(5-phospho-1-deoxy-D-ribulos-1-ylimino)methylamino]-1-(5-phospho-beta-D-ribosyl)imidazole-4-carboxamide + L-glutamine = D-erythro-1-(imidazol-4-yl)glycerol 3-phosphate + 5-amino-1-(5-phospho-beta-D-ribosyl)imidazole-4-carboxamide + L-glutamate + H(+). The enzyme catalyses L-glutamine + H2O = L-glutamate + NH4(+). It participates in amino-acid biosynthesis; L-histidine biosynthesis; L-histidine from 5-phospho-alpha-D-ribose 1-diphosphate: step 5/9. In terms of biological role, IGPS catalyzes the conversion of PRFAR and glutamine to IGP, AICAR and glutamate. The HisH subunit catalyzes the hydrolysis of glutamine to glutamate and ammonia as part of the synthesis of IGP and AICAR. The resulting ammonia molecule is channeled to the active site of HisF. The protein is Imidazole glycerol phosphate synthase subunit HisH of Gluconobacter oxydans (strain 621H) (Gluconobacter suboxydans).